The sequence spans 534 residues: MSDVSNEAARRRTFAIISHPDAGKTTLTEKLLLFGGAIQMAGSVKGRKAARHATSDWMALEKERGISVTSSVMQFPYEGKIVNLLDTPGHADFGEDTYRVLTAVDSALMVIDVAKGVEERTIKLMEVCRLRDTPIMTFINKLDREGKNPIDLLDEVETVLGIQCAPVTWPIGMGQRLKGVVHLISGEVHLYEQGRNFTRQDSTIFPSLDAPGLAEKIGEQMLTELRDELELVQGASNPFDLDAYRAGQQTPVFFGSGVNNFGVQPLLDFFIEHAPPPQTRETTGRRVAPSETKLSGFVFKIQANMDPQHRDRVAFMRVCSGKFTAGMKTLHVRSGKDVKLANALTFMASDREIAAEAWPGDVIGIHNHGTISIGDTFTEGESLSFTGIPNFAPELFRRARLRDPLKLKQLQKGLAQLSEEGATQFFRPLMSNDLILGAVGVLQFDVVAYRLKDEYGVDAIFEPVSVTTARWVHCDNVKKLDEFREKNAGNLGIDAAGQLVYLAPTRVNLQLAQERAPDVRFSATREHVHAKAID.

The tr-type G domain maps to 9 to 278 (ARRRTFAIIS…FFIEHAPPPQ (270 aa)). GTP contacts are provided by residues 18 to 25 (SHPDAGKT), 86 to 90 (DTPGH), and 140 to 143 (NKLD).

The protein belongs to the TRAFAC class translation factor GTPase superfamily. Classic translation factor GTPase family. PrfC subfamily.

It is found in the cytoplasm. Increases the formation of ribosomal termination complexes and stimulates activities of RF-1 and RF-2. It binds guanine nucleotides and has strong preference for UGA stop codons. It may interact directly with the ribosome. The stimulation of RF-1 and RF-2 is significantly reduced by GTP and GDP, but not by GMP. The chain is Peptide chain release factor 3 from Xanthomonas oryzae pv. oryzae (strain PXO99A).